A 343-amino-acid chain; its full sequence is Phosphoribosylformylglycinamidine cyclo-ligase (343 aa).

Belongs to the AIR synthase family.

Its subcellular location is the cytoplasm. It carries out the reaction 2-formamido-N(1)-(5-O-phospho-beta-D-ribosyl)acetamidine + ATP = 5-amino-1-(5-phospho-beta-D-ribosyl)imidazole + ADP + phosphate + H(+). It functions in the pathway purine metabolism; IMP biosynthesis via de novo pathway; 5-amino-1-(5-phospho-D-ribosyl)imidazole from N(2)-formyl-N(1)-(5-phospho-D-ribosyl)glycinamide: step 2/2. This Thermodesulfovibrio yellowstonii (strain ATCC 51303 / DSM 11347 / YP87) protein is Phosphoribosylformylglycinamidine cyclo-ligase.